The chain runs to 267 residues: Phosphatidylserine decarboxylase proenzyme (267 aa).

Catalysis depends on charge relay system; for autoendoproteolytic cleavage activity residues aspartate 78, histidine 132, and serine 236. Residue serine 236 is the Schiff-base intermediate with substrate; via pyruvic acid; for decarboxylase activity of the active site. Serine 236 carries the post-translational modification Pyruvic acid (Ser); by autocatalysis.

The protein belongs to the phosphatidylserine decarboxylase family. PSD-B subfamily. Prokaryotic type I sub-subfamily. Heterodimer of a large membrane-associated beta subunit and a small pyruvoyl-containing alpha subunit. Pyruvate serves as cofactor. Is synthesized initially as an inactive proenzyme. Formation of the active enzyme involves a self-maturation process in which the active site pyruvoyl group is generated from an internal serine residue via an autocatalytic post-translational modification. Two non-identical subunits are generated from the proenzyme in this reaction, and the pyruvate is formed at the N-terminus of the alpha chain, which is derived from the carboxyl end of the proenzyme. The autoendoproteolytic cleavage occurs by a canonical serine protease mechanism, in which the side chain hydroxyl group of the serine supplies its oxygen atom to form the C-terminus of the beta chain, while the remainder of the serine residue undergoes an oxidative deamination to produce ammonia and the pyruvoyl prosthetic group on the alpha chain. During this reaction, the Ser that is part of the protease active site of the proenzyme becomes the pyruvoyl prosthetic group, which constitutes an essential element of the active site of the mature decarboxylase.

It is found in the cell membrane. It catalyses the reaction a 1,2-diacyl-sn-glycero-3-phospho-L-serine + H(+) = a 1,2-diacyl-sn-glycero-3-phosphoethanolamine + CO2. The protein operates within phospholipid metabolism; phosphatidylethanolamine biosynthesis; phosphatidylethanolamine from CDP-diacylglycerol: step 2/2. Catalyzes the formation of phosphatidylethanolamine (PtdEtn) from phosphatidylserine (PtdSer). The chain is Phosphatidylserine decarboxylase proenzyme from Helicobacter pylori (strain J99 / ATCC 700824) (Campylobacter pylori J99).